The primary structure comprises 193 residues: MLGNLDKYQIILASNSPRRKELMSGLGVDYVVRTLPDVDESYPADLAGAEIPEYISREKADAYRSIMQPGELLITADTIVWLDGKVLGKPEGREGAVEMLRSLSGKSHQVFTGVCLTTTEWQKSFTAASDVEFDVLSEEEIRYYVDKYQPMDKAGAYGVQEWIGYIGVKSISGSFYNIMGLPIQKLYGELKKL.

Catalysis depends on Asp-77, which acts as the Proton acceptor.

Belongs to the Maf family. YhdE subfamily. A divalent metal cation is required as a cofactor.

It localises to the cytoplasm. It catalyses the reaction dTTP + H2O = dTMP + diphosphate + H(+). It carries out the reaction UTP + H2O = UMP + diphosphate + H(+). Its function is as follows. Nucleoside triphosphate pyrophosphatase that hydrolyzes dTTP and UTP. May have a dual role in cell division arrest and in preventing the incorporation of modified nucleotides into cellular nucleic acids. The chain is dTTP/UTP pyrophosphatase from Bacteroides thetaiotaomicron (strain ATCC 29148 / DSM 2079 / JCM 5827 / CCUG 10774 / NCTC 10582 / VPI-5482 / E50).